The following is a 183-amino-acid chain: NAD(P)H-quinone oxidoreductase subunit I, chloroplastic (183 aa).

2 consecutive 4Fe-4S ferredoxin-type domains span residues 55–84 (GRIHFEFDKCIACEVCVRVCPINLPVVDWE) and 95–124 (TSYSIDFGVCIFCGNCVEYCPTNCLSMTEE). [4Fe-4S] cluster contacts are provided by Cys-64, Cys-67, Cys-70, Cys-74, Cys-104, Cys-107, Cys-110, and Cys-114.

The protein belongs to the complex I 23 kDa subunit family. In terms of assembly, NDH is composed of at least 16 different subunits, 5 of which are encoded in the nucleus. [4Fe-4S] cluster is required as a cofactor.

The protein localises to the plastid. The protein resides in the chloroplast thylakoid membrane. The catalysed reaction is a plastoquinone + NADH + (n+1) H(+)(in) = a plastoquinol + NAD(+) + n H(+)(out). It carries out the reaction a plastoquinone + NADPH + (n+1) H(+)(in) = a plastoquinol + NADP(+) + n H(+)(out). In terms of biological role, NDH shuttles electrons from NAD(P)H:plastoquinone, via FMN and iron-sulfur (Fe-S) centers, to quinones in the photosynthetic chain and possibly in a chloroplast respiratory chain. The immediate electron acceptor for the enzyme in this species is believed to be plastoquinone. Couples the redox reaction to proton translocation, and thus conserves the redox energy in a proton gradient. This chain is NAD(P)H-quinone oxidoreductase subunit I, chloroplastic, found in Huperzia lucidula (Shining clubmoss).